The chain runs to 136 residues: Small nuclear ribonucleoprotein Sm D3 (136 aa).

The Sm domain maps to 6 to 78 (VPIKILHEAE…IRFMILPDML (73 aa)). Residues 98–136 (GLGGLDQRGRGRGTAFRRPMGRGGPRGMSRPGGAPTFRG) are disordered.

The protein belongs to the snRNP core protein family.

The protein resides in the nucleus. Its subcellular location is the cytoplasm. The protein localises to the cytosol. Functionally, plays a role in pre-mRNA splicing as a core component of the spliceosomal U1, U2, U4 and U5 small nuclear ribonucleoproteins (snRNPs), the building blocks of the spliceosome. This Caenorhabditis elegans protein is Small nuclear ribonucleoprotein Sm D3 (snr-1).